The sequence spans 144 residues: Large ribosomal subunit protein uL15 (144 aa).

The disordered stretch occupies residues 1-44; the sequence is MKLNELMPSEGSRTNRKRIGRGTSSGTGKTAGRGQKGQKARGKV. The span at 23-35 shows a compositional bias: gly residues; sequence TSSGTGKTAGRGQ.

Belongs to the universal ribosomal protein uL15 family. Part of the 50S ribosomal subunit.

Functionally, binds to the 23S rRNA. The chain is Large ribosomal subunit protein uL15 from Pediococcus pentosaceus (strain ATCC 25745 / CCUG 21536 / LMG 10740 / 183-1w).